Here is a 149-residue protein sequence, read N- to C-terminus: SsrA-binding protein (149 aa).

The interval 121 to 149 (GKKQHDKRADELDKDSKREAQRAMKERQR) is disordered. Residues 127–149 (KRADELDKDSKREAQRAMKERQR) show a composition bias toward basic and acidic residues.

It belongs to the SmpB family.

It localises to the cytoplasm. In terms of biological role, required for rescue of stalled ribosomes mediated by trans-translation. Binds to transfer-messenger RNA (tmRNA), required for stable association of tmRNA with ribosomes. tmRNA and SmpB together mimic tRNA shape, replacing the anticodon stem-loop with SmpB. tmRNA is encoded by the ssrA gene; the 2 termini fold to resemble tRNA(Ala) and it encodes a 'tag peptide', a short internal open reading frame. During trans-translation Ala-aminoacylated tmRNA acts like a tRNA, entering the A-site of stalled ribosomes, displacing the stalled mRNA. The ribosome then switches to translate the ORF on the tmRNA; the nascent peptide is terminated with the 'tag peptide' encoded by the tmRNA and targeted for degradation. The ribosome is freed to recommence translation, which seems to be the essential function of trans-translation. In Dechloromonas aromatica (strain RCB), this protein is SsrA-binding protein.